A 225-amino-acid polypeptide reads, in one-letter code: Cytidylate kinase (225 aa).

ATP is bound at residue 11–19; it reads GPAAAGKST.

It belongs to the cytidylate kinase family. Type 1 subfamily.

The protein localises to the cytoplasm. The enzyme catalyses CMP + ATP = CDP + ADP. The catalysed reaction is dCMP + ATP = dCDP + ADP. This is Cytidylate kinase from Bacillus cereus (strain B4264).